The following is a 121-amino-acid chain: Mediator of RNA polymerase II transcription subunit 22 (121 aa).

This sequence belongs to the Mediator complex subunit 22 family. Component of the Mediator complex.

Its subcellular location is the nucleus. In terms of biological role, component of the Mediator complex, a coactivator involved in the regulated transcription of nearly all RNA polymerase II-dependent genes. Mediator functions as a bridge to convey information from gene-specific regulatory proteins to the basal RNA polymerase II transcription machinery. Mediator is recruited to promoters by direct interactions with regulatory proteins and serves as a scaffold for the assembly of a functional preinitiation complex with RNA polymerase II and the general transcription factors. In Kluyveromyces lactis (strain ATCC 8585 / CBS 2359 / DSM 70799 / NBRC 1267 / NRRL Y-1140 / WM37) (Yeast), this protein is Mediator of RNA polymerase II transcription subunit 22 (SRB6).